Here is a 147-residue protein sequence, read N- to C-terminus: Probable disulfide formation protein (147 aa).

The chain crosses the membrane as a helical span at residues 9-28; the sequence is NYSLYFAWLTALIATLGSLY. Cysteine 38 and cysteine 41 are joined by a disulfide. 2 helical membrane-spanning segments follow: residues 43–62 and 69–86; these read YQRVCIYPLTILLGIAAYRT and YALPLVVLGFLFSIYQYL. Residues cysteine 99 and cysteine 106 are joined by a disulfide bond. Residues 115 to 138 traverse the membrane as a helical segment; that stretch reads GFITLPFLGMLATLIMSFFLIMAF.

This sequence belongs to the DsbB family. BdbC subfamily.

Its subcellular location is the cell inner membrane. Required for disulfide bond formation in some proteins. The sequence is that of Probable disulfide formation protein from Coxiella burnetii (strain CbuK_Q154) (Coxiella burnetii (strain Q154)).